The primary structure comprises 907 residues: Protein translocase subunit SecA (907 aa).

ATP-binding positions include Gln-87, 105–109 (GEGKT), and Asp-511. Residues Cys-891, Cys-893, Cys-902, and His-903 each contribute to the Zn(2+) site.

Belongs to the SecA family. In terms of assembly, monomer and homodimer. Part of the essential Sec protein translocation apparatus which comprises SecA, SecYEG and auxiliary proteins SecDF-YajC and YidC. Zn(2+) is required as a cofactor.

The protein localises to the cell inner membrane. Its subcellular location is the cytoplasm. The catalysed reaction is ATP + H2O + cellular proteinSide 1 = ADP + phosphate + cellular proteinSide 2.. Functionally, part of the Sec protein translocase complex. Interacts with the SecYEG preprotein conducting channel. Has a central role in coupling the hydrolysis of ATP to the transfer of proteins into and across the cell membrane, serving both as a receptor for the preprotein-SecB complex and as an ATP-driven molecular motor driving the stepwise translocation of polypeptide chains across the membrane. The polypeptide is Protein translocase subunit SecA (Aromatoleum aromaticum (strain DSM 19018 / LMG 30748 / EbN1) (Azoarcus sp. (strain EbN1))).